A 326-amino-acid chain; its full sequence is MSNISVIGTGSYVPNNIITNDFLSTIVDTSDEWIRTRTGILERRISKGENTIYMATESAKEAIKNANIEANDLDLIIVATLTPDNFMPSTACSVQKEIGAMNALCFDISAACSGFIYGLEIACSMLKNSFRNKALIIGAENLSKIVDWEDRNTCVLFGDGAGSAILSKTKEEGILEFHSGSNGLKGEHLTCGVLKANNTPNKNDSLEKNNFIKMNGKEIFRFAVGAMNETIYNIQEKTKWDLNEVKYIISHQANSRIIEYTAKKLNTEKDKFYMNLDKYGNTSAASIPIALDEMNKRGLLNKQDKIILVGFGGGLTFGGVAIVWSI.

Residues Cys112 and His251 contribute to the active site. The interval 252–256 (QANSR) is ACP-binding. Asn281 is a catalytic residue.

Belongs to the thiolase-like superfamily. FabH family. As to quaternary structure, homodimer.

It localises to the cytoplasm. It catalyses the reaction malonyl-[ACP] + acetyl-CoA + H(+) = 3-oxobutanoyl-[ACP] + CO2 + CoA. The protein operates within lipid metabolism; fatty acid biosynthesis. Functionally, catalyzes the condensation reaction of fatty acid synthesis by the addition to an acyl acceptor of two carbons from malonyl-ACP. Catalyzes the first condensation reaction which initiates fatty acid synthesis and may therefore play a role in governing the total rate of fatty acid production. Possesses both acetoacetyl-ACP synthase and acetyl transacylase activities. Its substrate specificity determines the biosynthesis of branched-chain and/or straight-chain of fatty acids. In Clostridium botulinum (strain ATCC 19397 / Type A), this protein is Beta-ketoacyl-[acyl-carrier-protein] synthase III.